We begin with the raw amino-acid sequence, 374 residues long: Ribosomal RNA large subunit methyltransferase G (374 aa).

This sequence belongs to the methyltransferase superfamily. RlmG family.

The protein resides in the cytoplasm. The enzyme catalyses guanosine(1835) in 23S rRNA + S-adenosyl-L-methionine = N(2)-methylguanosine(1835) in 23S rRNA + S-adenosyl-L-homocysteine + H(+). Specifically methylates the guanine in position 1835 (m2G1835) of 23S rRNA. This chain is Ribosomal RNA large subunit methyltransferase G, found in Pseudomonas aeruginosa (strain ATCC 15692 / DSM 22644 / CIP 104116 / JCM 14847 / LMG 12228 / 1C / PRS 101 / PAO1).